Here is a 141-residue protein sequence, read N- to C-terminus: Large ribosomal subunit protein uL11 (141 aa).

This sequence belongs to the universal ribosomal protein uL11 family. In terms of assembly, part of the ribosomal stalk of the 50S ribosomal subunit. Interacts with L10 and the large rRNA to form the base of the stalk. L10 forms an elongated spine to which L12 dimers bind in a sequential fashion forming a multimeric L10(L12)X complex. In terms of processing, one or more lysine residues are methylated.

Its function is as follows. Forms part of the ribosomal stalk which helps the ribosome interact with GTP-bound translation factors. In Chloroflexus aggregans (strain MD-66 / DSM 9485), this protein is Large ribosomal subunit protein uL11.